The following is a 319-amino-acid chain: Acetyl-coenzyme A carboxylase carboxyl transferase subunit alpha (319 aa).

Positions 35-296 constitute a CoA carboxyltransferase C-terminal domain; the sequence is NIDEEVHRLR…KAQLLADLAD (262 aa).

Belongs to the AccA family. As to quaternary structure, acetyl-CoA carboxylase is a heterohexamer composed of biotin carboxyl carrier protein (AccB), biotin carboxylase (AccC) and two subunits each of ACCase subunit alpha (AccA) and ACCase subunit beta (AccD).

It is found in the cytoplasm. It carries out the reaction N(6)-carboxybiotinyl-L-lysyl-[protein] + acetyl-CoA = N(6)-biotinyl-L-lysyl-[protein] + malonyl-CoA. Its pathway is lipid metabolism; malonyl-CoA biosynthesis; malonyl-CoA from acetyl-CoA: step 1/1. Functionally, component of the acetyl coenzyme A carboxylase (ACC) complex. First, biotin carboxylase catalyzes the carboxylation of biotin on its carrier protein (BCCP) and then the CO(2) group is transferred by the carboxyltransferase to acetyl-CoA to form malonyl-CoA. This Escherichia coli O127:H6 (strain E2348/69 / EPEC) protein is Acetyl-coenzyme A carboxylase carboxyl transferase subunit alpha.